The primary structure comprises 446 residues: Tubulin alpha chain-like 3 (446 aa).

An MREC motif motif is present at residues 1–4 (MREC). GTP-binding residues include Q11, E78, S147, G151, T152, T186, N213, and N235. Residue E78 coordinates Mg(2+). Residue E261 is part of the active site.

The protein belongs to the tubulin family. Dimer of alpha and beta chains. A typical microtubule is a hollow water-filled tube with an outer diameter of 25 nm and an inner diameter of 15 nM. Alpha-beta heterodimers associate head-to-tail to form protofilaments running lengthwise along the microtubule wall with the beta-tubulin subunit facing the microtubule plus end conferring a structural polarity. Microtubules usually have 13 protofilaments but different protofilament numbers can be found in some organisms and specialized cells. The cofactor is Mg(2+). Some glutamate residues at the C-terminus are polyglycylated, resulting in polyglycine chains on the gamma-carboxyl group. Glycylation is mainly limited to tubulin incorporated into axonemes (cilia and flagella) whereas glutamylation is prevalent in neuronal cells, centrioles, axonemes, and the mitotic spindle. Both modifications can coexist on the same protein on adjacent residues, and lowering polyglycylation levels increases polyglutamylation, and reciprocally. Cilia and flagella glycylation is required for their stability and maintenance. Flagella glycylation controls sperm motility. In terms of processing, some glutamate residues at the C-terminus are polyglutamylated, resulting in polyglutamate chains on the gamma-carboxyl group. Polyglutamylation plays a key role in microtubule severing by spastin (SPAST). SPAST preferentially recognizes and acts on microtubules decorated with short polyglutamate tails: severing activity by SPAST increases as the number of glutamates per tubulin rises from one to eight, but decreases beyond this glutamylation threshold. Glutamylation is also involved in cilia motility.

The protein resides in the cytoplasm. It localises to the cytoskeleton. It catalyses the reaction GTP + H2O = GDP + phosphate + H(+). Its function is as follows. Tubulin is the major constituent of microtubules, a cylinder consisting of laterally associated linear protofilaments composed of alpha- and beta-tubulin heterodimers. Microtubules grow by the addition of GTP-tubulin dimers to the microtubule end, where a stabilizing cap forms. Below the cap, tubulin dimers are in GDP-bound state, owing to GTPase activity of alpha-tubulin. The polypeptide is Tubulin alpha chain-like 3 (Tubal3) (Mus musculus (Mouse)).